The following is a 231-amino-acid chain: Probable septum site-determining protein MinC (231 aa).

Residues 102–125 (KEKAPRPAPAPQAPTQNTTPVTKT) form a disordered region. The span at 114–123 (APTQNTTPVT) shows a compositional bias: low complexity.

Belongs to the MinC family. As to quaternary structure, interacts with MinD and FtsZ.

In terms of biological role, cell division inhibitor that blocks the formation of polar Z ring septums. Rapidly oscillates between the poles of the cell to destabilize FtsZ filaments that have formed before they mature into polar Z rings. Prevents FtsZ polymerization. The protein is Probable septum site-determining protein MinC of Escherichia coli O45:K1 (strain S88 / ExPEC).